A 463-amino-acid chain; its full sequence is Phosphomannomutase/phosphoglucomutase (463 aa).

Position 17 (Tyr17) interacts with alpha-D-glucose 1-phosphate. Tyr17 lines the alpha-D-mannose 1-phosphate pocket. The active-site Non-phosphorylated intermediate is the Ser108. Mg(2+)-binding residues include Ser108, Asp242, Asp244, and Asp246. Ser108 bears the Phosphoserine mark. Residues Lys285, His308, 325–329 (EMSGH), and 421–425 (RASNT) each bind alpha-D-glucose 1-phosphate. Alpha-D-mannose 1-phosphate contacts are provided by residues His308, 325 to 329 (EMSGH), and 421 to 425 (RASNT).

It belongs to the phosphohexose mutase family. Monomer. Mg(2+) is required as a cofactor.

The enzyme catalyses alpha-D-mannose 1-phosphate = D-mannose 6-phosphate. The catalysed reaction is alpha-D-glucose 1-phosphate = alpha-D-glucose 6-phosphate. It functions in the pathway nucleotide-sugar biosynthesis; GDP-alpha-D-mannose biosynthesis; alpha-D-mannose 1-phosphate from D-fructose 6-phosphate: step 2/2. Its pathway is bacterial outer membrane biogenesis; lipopolysaccharide biosynthesis. Functionally, highly reversible phosphoryltransferase. The phosphomannomutase activity produces a precursor for alginate polymerization, the alginate layer causes a mucoid phenotype and provides a protective barrier against host immune defenses and antibiotics. Also involved in core lipopolysaccaride (LPS) biosynthesis due to its phosphoglucomutase activity. Essential for rhamnolipid production, an exoproduct correlated with pathogenicity. Required for biofilm production. The reaction proceeds via 2 processive phosphoryl transferase reactions; first from enzyme-phospho-Ser-108 to the substrate (generating a bisphosphorylated substrate intermediate and a dephosphorylated enzyme), a 180 degree rotation of the intermediate (probably aided by movement of domain 4), and subsequent transfer of phosphate back to the enzyme. The sequence is that of Phosphomannomutase/phosphoglucomutase (algC) from Pseudomonas aeruginosa (strain UCBPP-PA14).